The primary structure comprises 180 residues: ATP-dependent protease subunit HslV (180 aa).

Thr5 is an active-site residue. Gly161, Cys164, and Thr167 together coordinate Na(+).

Belongs to the peptidase T1B family. HslV subfamily. A double ring-shaped homohexamer of HslV is capped on each side by a ring-shaped HslU homohexamer. The assembly of the HslU/HslV complex is dependent on binding of ATP.

It is found in the cytoplasm. It carries out the reaction ATP-dependent cleavage of peptide bonds with broad specificity.. Allosterically activated by HslU binding. In terms of biological role, protease subunit of a proteasome-like degradation complex believed to be a general protein degrading machinery. In Campylobacter jejuni subsp. doylei (strain ATCC BAA-1458 / RM4099 / 269.97), this protein is ATP-dependent protease subunit HslV.